A 446-amino-acid polypeptide reads, in one-letter code: N-succinylarginine dihydrolase (446 aa).

Substrate contacts are provided by residues 19 to 28 (AGLSFGNVAS), Asn-110, and 137 to 138 (HR). The active site involves Glu-174. Arg-213 contributes to the substrate binding site. His-249 is a catalytic residue. Substrate is bound by residues Asp-251 and Asn-364. The active-site Nucleophile is the Cys-370.

It belongs to the succinylarginine dihydrolase family. Homodimer.

It catalyses the reaction N(2)-succinyl-L-arginine + 2 H2O + 2 H(+) = N(2)-succinyl-L-ornithine + 2 NH4(+) + CO2. It functions in the pathway amino-acid degradation; L-arginine degradation via AST pathway; L-glutamate and succinate from L-arginine: step 2/5. In terms of biological role, catalyzes the hydrolysis of N(2)-succinylarginine into N(2)-succinylornithine, ammonia and CO(2). This chain is N-succinylarginine dihydrolase, found in Burkholderia mallei (strain NCTC 10247).